The chain runs to 246 residues: MTMDKSELVQKAKLAEQAERYDDMAAAMKAVTEQGHELSNEERNLLSVAYKNVVGARRSSWRVISSIEQKTERNEKKQQMGKEYREKIEAELQDICNDVLELLDKYLIPNATQPESKVFYLKMKGDYFRYLSEVASGDNKQTTVSNSQQAYQEAFEISKKEMQPTHPIRLGLALNFSVFYYEILNSPEKACSLAKTAFDEAIAELDTLNEESYKDSTLIMQLLRDNLTLWTSENQGDEGDAGEGEN.

Met-1 carries the post-translational modification N-acetylmethionine; in 14-3-3 protein beta/alpha; alternate. At Met-1 the chain carries N-acetylmethionine. Thr-2 is modified (N-acetylthreonine; in 14-3-3 protein beta/alpha, N-terminally processed). At Thr-2 the chain carries Phosphothreonine. Lys-5 carries the N6-acetyllysine modification. At Lys-51 the chain carries N6-acetyllysine; alternate. Residue Lys-51 forms a Glycyl lysine isopeptide (Lys-Gly) (interchain with G-Cter in SUMO2); alternate linkage. The residue at position 60 (Ser-60) is a Phosphoserine. Lys-70 is modified (N6-acetyllysine). Tyr-84 and Tyr-106 each carry 3'-nitrotyrosine. Lys-117 bears the N6-acetyllysine mark. Residues Ser-186 and Ser-232 each carry the phosphoserine modification.

This sequence belongs to the 14-3-3 family. In terms of assembly, homodimer. Interacts with SAMSN1 and PRKCE. Interacts with AKAP13. Interacts with SSH1 and TORC2/CRTC2. Interacts with ABL1; the interaction results in cytoplasmic location of ABL1 and inhibition of cABL-mediated apoptosis. Interacts with ROR2 (dimer); the interaction results in phosphorylation of YWHAB on tyrosine residues. Interacts with GAB2. Interacts with YAP1 (phosphorylated form). Interacts with the phosphorylated (by AKT1) form of SRPK2. Interacts with PKA-phosphorylated AANAT. Interacts with MYO1C. Interacts with SIRT2. Interacts with the 'Thr-369' phosphorylated form of DAPK2. Interacts with PI4KB, TBC1D22A and TBC1D22B. Interacts with the 'Ser-1134' and 'Ser-1161' phosphorylated form of SOS1. Interacts (via phosphorylated form) with YWHAB; this interaction occurs in a protein kinase AKT1-dependent manner. Interacts with SLITRK1. Interacts with SYNPO2 (phosphorylated form); YWHAB competes with ACTN2 for interaction with SYNPO2. Interacts with RIPOR2 (via phosphorylated form) isoform 2; this interaction occurs in a chemokine-dependent manner and does not compete for binding of RIPOR2 with RHOA nor blocks inhibition of RIPOR2-mediated RHOA activity. Interacts with MARK2 and MARK3. Interacts with TESK1; the interaction is dependent on the phosphorylation of TESK1 'Ser-437' and inhibits TESK1 kinase activity. Interacts with MEFV. Interacts with HDAC4. Interacts with ADAM22 (via C-terminus). As to quaternary structure, (Microbial infection) Interacts with herpes simplex virus 1 protein UL46. (Microbial infection) Probably interacts with Chlamydia trachomatis protein IncG. In terms of processing, the alpha, brain-specific form differs from the beta form in being phosphorylated. Phosphorylated on Ser-60 by protein kinase C delta type catalytic subunit in a sphingosine-dependent fashion.

Its subcellular location is the cytoplasm. It is found in the melanosome. It localises to the vacuole membrane. In terms of biological role, adapter protein implicated in the regulation of a large spectrum of both general and specialized signaling pathways. Binds to a large number of partners, usually by recognition of a phosphoserine or phosphothreonine motif. Binding generally results in the modulation of the activity of the binding partner. Negative regulator of osteogenesis. Blocks the nuclear translocation of the phosphorylated form (by AKT1) of SRPK2 and antagonizes its stimulatory effect on cyclin D1 expression resulting in blockage of neuronal apoptosis elicited by SRPK2. Negative regulator of signaling cascades that mediate activation of MAP kinases via AKAP13. This Homo sapiens (Human) protein is 14-3-3 protein beta/alpha (YWHAB).